The primary structure comprises 445 residues: Trigger factor (445 aa).

The PPIase FKBP-type domain occupies 162–247 (GDQVTIDAIG…IKAVHTAEPT (86 aa)).

The protein belongs to the FKBP-type PPIase family. Tig subfamily.

The protein localises to the cytoplasm. It carries out the reaction [protein]-peptidylproline (omega=180) = [protein]-peptidylproline (omega=0). Functionally, involved in protein export. Acts as a chaperone by maintaining the newly synthesized protein in an open conformation. Functions as a peptidyl-prolyl cis-trans isomerase. The polypeptide is Trigger factor (Rickettsia conorii (strain ATCC VR-613 / Malish 7)).